A 244-amino-acid chain; its full sequence is Na(+)-translocating NADH-quinone reductase subunit E (244 aa).

6 helical membrane passes run 11 to 31 (LLGI…TFLG), 50 to 70 (MSVA…HYFI), 90 to 110 (FLEL…LEVL), 123 to 143 (GIFL…LFGI), 153 to 173 (VVFS…FATI), and 191 to 211 (ISFI…GIDI). The segment covering 222–236 (VTNIATDSPQPNTHS) has biased composition (polar residues). The interval 222-244 (VTNIATDSPQPNTHSSSEEPKAS) is disordered.

The protein belongs to the NqrDE/RnfAE family. In terms of assembly, composed of six subunits; NqrA, NqrB, NqrC, NqrD, NqrE and NqrF.

Its subcellular location is the cell inner membrane. It catalyses the reaction a ubiquinone + n Na(+)(in) + NADH + H(+) = a ubiquinol + n Na(+)(out) + NAD(+). Its function is as follows. NQR complex catalyzes the reduction of ubiquinone-1 to ubiquinol by two successive reactions, coupled with the transport of Na(+) ions from the cytoplasm to the periplasm. NqrA to NqrE are probably involved in the second step, the conversion of ubisemiquinone to ubiquinol. In Chlamydia trachomatis serovar A (strain ATCC VR-571B / DSM 19440 / HAR-13), this protein is Na(+)-translocating NADH-quinone reductase subunit E.